We begin with the raw amino-acid sequence, 599 residues long: NADH-quinone oxidoreductase subunit C/D (599 aa).

Polar residues predominate over residues 1 to 15 (MTDLTAQELAQPSWQ). Positions 1–21 (MTDLTAQELAQPSWQTRDHQD) are disordered. Residues 1–189 (MTDLTAQELA…DPFELTKQKE (189 aa)) form an NADH dehydrogenase I subunit C region. Residues 213-599 (DFMFLNLGPN…IDFVMSDVDR (387 aa)) form an NADH dehydrogenase I subunit D region.

In the N-terminal section; belongs to the complex I 30 kDa subunit family. This sequence in the C-terminal section; belongs to the complex I 49 kDa subunit family. In terms of assembly, NDH-1 is composed of 13 different subunits. Subunits NuoB, CD, E, F, and G constitute the peripheral sector of the complex.

The protein localises to the cell inner membrane. The enzyme catalyses a quinone + NADH + 5 H(+)(in) = a quinol + NAD(+) + 4 H(+)(out). Its function is as follows. NDH-1 shuttles electrons from NADH, via FMN and iron-sulfur (Fe-S) centers, to quinones in the respiratory chain. The immediate electron acceptor for the enzyme in this species is believed to be ubiquinone. Couples the redox reaction to proton translocation (for every two electrons transferred, four hydrogen ions are translocated across the cytoplasmic membrane), and thus conserves the redox energy in a proton gradient. The polypeptide is NADH-quinone oxidoreductase subunit C/D (Erwinia tasmaniensis (strain DSM 17950 / CFBP 7177 / CIP 109463 / NCPPB 4357 / Et1/99)).